The following is a 556-amino-acid chain: Glutamine--tRNA ligase (556 aa).

The short motif at 34–44 (PEPNGFLHIGH) is the 'HIGH' region element. Residues 35 to 37 (EPN) and 41 to 47 (HIGHAKA) contribute to the ATP site. L-glutamine-binding residues include Asp-67 and Tyr-212. ATP-binding positions include Thr-231, 261–262 (RL), and 269–271 (MSK). A 'KMSKS' region motif is present at residues 268–272 (LMSKR).

The protein belongs to the class-I aminoacyl-tRNA synthetase family. As to quaternary structure, monomer.

The protein localises to the cytoplasm. The catalysed reaction is tRNA(Gln) + L-glutamine + ATP = L-glutaminyl-tRNA(Gln) + AMP + diphosphate. The protein is Glutamine--tRNA ligase of Colwellia psychrerythraea (strain 34H / ATCC BAA-681) (Vibrio psychroerythus).